Reading from the N-terminus, the 29-residue chain is Galanin (29 aa).

The residue at position 29 (Ala29) is an Alanine amide.

The protein belongs to the galanin family.

The protein resides in the secreted. Its function is as follows. Contracts smooth muscle of the gastrointestinal and genitourinary tract, regulates growth hormone release, modulates insulin release, and may be involved in the control of adrenal secretion. The sequence is that of Galanin (gal) from Pelophylax ridibundus (Marsh frog).